The sequence spans 395 residues: Scyllo-inosose 3-dehydrogenase (395 aa).

A Zn(2+)-binding site is contributed by C66. Active-site charge relay system residues include S68 and H71. Zn(2+) is bound by residues H95, E96, C131, C134, C137, C145, and E193. NAD(+) contacts are provided by I223, E243, and R248.

This sequence belongs to the zinc-containing alcohol dehydrogenase family. In terms of assembly, homodimer. Zn(2+) is required as a cofactor.

The enzyme catalyses scyllo-inosose + NAD(+) = 3-dehydro-scyllo-inosose + NADH + H(+). Its pathway is polyol metabolism; myo-inositol metabolism. Its function is as follows. Catalyzes the NAD(+)-dependent oxidation of scyllo-inosose (2-keto-myo-inositol) to 3-dehydro-scyllo-inosose (diketo-inositol), and thus probably functions in a myo-inositol degradation pathway together with IolG, IolN and IolO. Has no activity on myo-inositol, D-chiro-inositol and 1-keto-D-chiro-inositol. The chain is Scyllo-inosose 3-dehydrogenase from Thermotoga maritima (strain ATCC 43589 / DSM 3109 / JCM 10099 / NBRC 100826 / MSB8).